A 250-amino-acid polypeptide reads, in one-letter code: 7-carboxy-7-deazaguanine synthase (250 aa).

Residues 15–17 (VQG) and Arg30 each bind substrate. A Radical SAM core domain is found at 21–250 (LIGLRQVFIR…PQTHRFMGQL (230 aa)). 3 residues coordinate [4Fe-4S] cluster: Cys34, Cys38, and Cys41. Thr43 lines the Mg(2+) pocket. Residue Thr96 coordinates substrate. Residue Gly98 coordinates S-adenosyl-L-methionine.

It belongs to the radical SAM superfamily. 7-carboxy-7-deazaguanine synthase family. As to quaternary structure, homodimer. Requires [4Fe-4S] cluster as cofactor. The cofactor is S-adenosyl-L-methionine. Mg(2+) serves as cofactor.

The catalysed reaction is 6-carboxy-5,6,7,8-tetrahydropterin + H(+) = 7-carboxy-7-deazaguanine + NH4(+). It functions in the pathway purine metabolism; 7-cyano-7-deazaguanine biosynthesis. Functionally, catalyzes the complex heterocyclic radical-mediated conversion of 6-carboxy-5,6,7,8-tetrahydropterin (CPH4) to 7-carboxy-7-deazaguanine (CDG), a step common to the biosynthetic pathways of all 7-deazapurine-containing compounds. In Geobacter sulfurreducens (strain ATCC 51573 / DSM 12127 / PCA), this protein is 7-carboxy-7-deazaguanine synthase.